A 300-amino-acid chain; its full sequence is Virginiamycin B lyase (300 aa).

Position 231 (histidine 231) interacts with substrate. Mg(2+) is bound at residue glutamate 270. Histidine 272 serves as the catalytic Proton acceptor. Position 287 (glutamate 287) interacts with Mg(2+).

It belongs to the Vgb family. As to quaternary structure, monomer. Mg(2+) serves as cofactor.

Inactivates the type B streptogramin antibiotics by linearizing the lactone ring at the ester linkage, generating a free phenylglycine carboxylate and converting the threonyl moiety into 2-amino-butenoic acid. The chain is Virginiamycin B lyase from Saccharopolyspora erythraea (strain ATCC 11635 / DSM 40517 / JCM 4748 / NBRC 13426 / NCIMB 8594 / NRRL 2338).